Consider the following 631-residue polypeptide: Dolichyl-diphosphooligosaccharide--protein glycosyltransferase subunit 2 (631 aa).

The signal sequence occupies residues 1–22 (MAPPGSSAVFLLALTITASVQA). The Lumenal segment spans residues 23–540 (LTPTHYLTKQ…REPEKRPPTV (518 aa)). N-linked (GlcNAc...) asparagine glycosylation occurs at N106. A Glycyl lysine isopeptide (Lys-Gly) (interchain with G-Cter in ubiquitin) cross-link involves residue K154. A helical membrane pass occupies residues 541–561 (VSNTFTALILSPLLLLFALWI). Residues 562-571 (RIGANVSNFT) are Cytoplasmic-facing. The helical transmembrane segment at 572-592 (FAPSTVIFHLGHAAMLGLMYI) threads the bilayer. Residues 593–596 (YWTQ) are Lumenal-facing. A helical transmembrane segment spans residues 597 to 617 (LNMFQTLKYLAVLGTVTFLAG). Over 618–631 (NRMLAQHAVKRTAH) the chain is Cytoplasmic.

The protein belongs to the SWP1 family. As to quaternary structure, component of the oligosaccharyltransferase (OST) complex. OST exists in two different complex forms which contain common core subunits RPN1, RPN2, OST48, OST4, DAD1 and TMEM258, either STT3A or STT3B as catalytic subunits, and form-specific accessory subunits. STT3A complex assembly occurs through the formation of 3 subcomplexes. Subcomplex 1 contains RPN1 and TMEM258, subcomplex 2 contains the STT3A-specific subunits STT3A, DC2/OSTC, and KCP2 as well as the core subunit OST4, and subcomplex 3 contains RPN2, DAD1, and OST48. The STT3A complex can form stable complexes with the Sec61 complex or with both the Sec61 and TRAP complexes. Interacts with DDI2. Interacts with TMEM35A/NACHO.

The protein localises to the endoplasmic reticulum. Its subcellular location is the endoplasmic reticulum membrane. Its pathway is protein modification; protein glycosylation. Functionally, subunit of the oligosaccharyl transferase (OST) complex that catalyzes the initial transfer of a defined glycan (Glc(3)Man(9)GlcNAc(2) in eukaryotes) from the lipid carrier dolichol-pyrophosphate to an asparagine residue within an Asn-X-Ser/Thr consensus motif in nascent polypeptide chains, the first step in protein N-glycosylation. N-glycosylation occurs cotranslationally and the complex associates with the Sec61 complex at the channel-forming translocon complex that mediates protein translocation across the endoplasmic reticulum (ER). All subunits are required for a maximal enzyme activity. The protein is Dolichyl-diphosphooligosaccharide--protein glycosyltransferase subunit 2 of Mus musculus (Mouse).